We begin with the raw amino-acid sequence, 696 residues long: Elongation factor G (696 aa).

Residues T10–L290 form the tr-type G domain. GTP contacts are provided by residues A19–T26, D89–H93, and N143–D146.

It belongs to the TRAFAC class translation factor GTPase superfamily. Classic translation factor GTPase family. EF-G/EF-2 subfamily.

It is found in the cytoplasm. Its function is as follows. Catalyzes the GTP-dependent ribosomal translocation step during translation elongation. During this step, the ribosome changes from the pre-translocational (PRE) to the post-translocational (POST) state as the newly formed A-site-bound peptidyl-tRNA and P-site-bound deacylated tRNA move to the P and E sites, respectively. Catalyzes the coordinated movement of the two tRNA molecules, the mRNA and conformational changes in the ribosome. The chain is Elongation factor G from Deinococcus geothermalis (strain DSM 11300 / CIP 105573 / AG-3a).